A 335-amino-acid chain; its full sequence is L-tyrosine isonitrile synthase (335 aa).

It belongs to the isocyanide synthase family.

It catalyses the reaction D-ribulose 5-phosphate + L-tyrosine = (2S)-3-(4-hydroxyphenyl)-2-isocyanopropanoate + hydroxyacetone + formaldehyde + phosphate + H2O + H(+). Its function is as follows. Involved in the biosynthesis of rhabduscin, a tyrosine derivative which is a potent inhibitor of phenoloxidase, a key component of the insect's innate immune system. Responsible for the synthesis of the isonitrile group on tyrosine using the C2 of ribulose 5-phosphate as the source of the carbon atom. This Xenorhabdus nematophila (strain ATCC 19061 / DSM 3370 / CCUG 14189 / LMG 1036 / NCIMB 9965 / AN6) protein is L-tyrosine isonitrile synthase.